Here is a 1025-residue protein sequence, read N- to C-terminus: Probable beta-galactosidase B (1025 aa).

A signal peptide spans 1 to 21; it reads MATAFWLLLFLLGSLHVLTAA. Residue asparagine 23 is glycosylated (N-linked (GlcNAc...) asparagine). Tyrosine 90 contacts substrate. Asparagine 100 carries an N-linked (GlcNAc...) asparagine glycan. 4 residues coordinate substrate: asparagine 135, alanine 136, glutamate 137, and asparagine 195. The active-site Proton donor is glutamate 196. N-linked (GlcNAc...) asparagine glycosylation occurs at asparagine 211. Tyrosine 265 serves as a coordination point for substrate. A disulfide bridge links cysteine 271 with cysteine 324. Glutamate 308 (nucleophile) is an active-site residue. Tyrosine 373 contributes to the substrate binding site. Asparagine 411, asparagine 456, asparagine 736, asparagine 776, asparagine 884, asparagine 925, and asparagine 926 each carry an N-linked (GlcNAc...) asparagine glycan.

This sequence belongs to the glycosyl hydrolase 35 family.

The protein localises to the secreted. The enzyme catalyses Hydrolysis of terminal non-reducing beta-D-galactose residues in beta-D-galactosides.. Functionally, cleaves beta-linked terminal galactosyl residues from gangliosides, glycoproteins, and glycosaminoglycans. The chain is Probable beta-galactosidase B (lacB) from Emericella nidulans (strain FGSC A4 / ATCC 38163 / CBS 112.46 / NRRL 194 / M139) (Aspergillus nidulans).